We begin with the raw amino-acid sequence, 194 residues long: Molybdenum cofactor guanylyltransferase (194 aa).

GTP is bound by residues 12–14, Lys25, Asn53, Asp70, and Asp100; that span reads LAG. Asp100 is a Mg(2+) binding site.

The protein belongs to the MobA family. As to quaternary structure, monomer. The cofactor is Mg(2+).

The protein localises to the cytoplasm. It catalyses the reaction Mo-molybdopterin + GTP + H(+) = Mo-molybdopterin guanine dinucleotide + diphosphate. Transfers a GMP moiety from GTP to Mo-molybdopterin (Mo-MPT) cofactor (Moco or molybdenum cofactor) to form Mo-molybdopterin guanine dinucleotide (Mo-MGD) cofactor. In Aliivibrio salmonicida (strain LFI1238) (Vibrio salmonicida (strain LFI1238)), this protein is Molybdenum cofactor guanylyltransferase.